Reading from the N-terminus, the 225-residue chain is Ribose-5-phosphate isomerase A (225 aa).

Substrate is bound by residues 26 to 29 (TGST), 82 to 85 (DGAD), and 95 to 98 (KGGG). Glutamate 104 functions as the Proton acceptor in the catalytic mechanism. Lysine 122 provides a ligand contact to substrate.

This sequence belongs to the ribose 5-phosphate isomerase family. In terms of assembly, homodimer.

The catalysed reaction is aldehydo-D-ribose 5-phosphate = D-ribulose 5-phosphate. It functions in the pathway carbohydrate degradation; pentose phosphate pathway; D-ribose 5-phosphate from D-ribulose 5-phosphate (non-oxidative stage): step 1/1. Its function is as follows. Catalyzes the reversible conversion of ribose-5-phosphate to ribulose 5-phosphate. This Streptococcus sanguinis (strain SK36) protein is Ribose-5-phosphate isomerase A.